Here is a 237-residue protein sequence, read N- to C-terminus: Keratin-associated protein 5-5 (237 aa).

8 tandem repeats follow at residues 62–65 (CCVP), 68–71 (CCKP), 74–77 (CCVP), 159–162 (CCKP), 178–181 (CCKP), 188–191 (CCKP), 198–201 (CCKP), and 227–230 (CCVP). An 8 X 4 AA repeats of C-C-X-P region spans residues 62 to 230 (CCVPVCCCKP…CCCQSSCCVP (169 aa)).

This sequence belongs to the KRTAP type 5 family. As to quaternary structure, interacts with hair keratins. As to expression, restricted to hair root, not detected in any other tissues.

Functionally, in the hair cortex, hair keratin intermediate filaments are embedded in an interfilamentous matrix, consisting of hair keratin-associated protein (KRTAP), which are essential for the formation of a rigid and resistant hair shaft through their extensive disulfide bond cross-linking with abundant cysteine residues of hair keratins. The matrix proteins include the high-sulfur and high-glycine-tyrosine keratins. This chain is Keratin-associated protein 5-5 (KRTAP5-5), found in Homo sapiens (Human).